Consider the following 334-residue polypeptide: Porphobilinogen deaminase (334 aa).

S-(dipyrrolylmethanemethyl)cysteine is present on Cys-250.

The protein belongs to the HMBS family. In terms of assembly, monomer. Requires dipyrromethane as cofactor.

It catalyses the reaction 4 porphobilinogen + H2O = hydroxymethylbilane + 4 NH4(+). The protein operates within porphyrin-containing compound metabolism; protoporphyrin-IX biosynthesis; coproporphyrinogen-III from 5-aminolevulinate: step 2/4. Functionally, tetrapolymerization of the monopyrrole PBG into the hydroxymethylbilane pre-uroporphyrinogen in several discrete steps. This is Porphobilinogen deaminase from Cutibacterium acnes (strain DSM 16379 / KPA171202) (Propionibacterium acnes).